The primary structure comprises 527 residues: Zinc finger imprinted 2 (527 aa).

A compositionally biased stretch (acidic residues) spans 1–16 (MYQPEDDNNSDVTSDD). The segment at 1-104 (MYQPEDDNNS…SRSQDAESYQ (104 aa)) is disordered. 3 stretches are compositionally biased toward basic and acidic residues: residues 17–26 (DMTRNRRESS), 35–56 (SGDR…DRWS), and 80–99 (FEMD…RSQD). Positions 176 to 246 (VTFEDVLVDF…ETDSRHTVIC (71 aa)) constitute a KRAB domain. The interval 247 to 322 (QGESHDDPLE…GICTSPQSAS (76 aa)) is disordered. Residues 259-275 (QGNQEKLLTPITMNDPK) show a composition bias toward polar residues. Over residues 297-307 (QSKDPLGKDPQ) the composition is skewed to basic and acidic residues. 5 C2H2-type zinc fingers span residues 328 to 350 (NRCE…ERIH), 356 to 378 (YECK…QKTH), 412 to 434 (FECF…LKAH), 466 to 488 (CQCC…YRTH), and 494 to 516 (YQCQ…YQLH).

Belongs to the krueppel C2H2-type zinc-finger protein family. As to expression, highest levels of expression in adult testis; modest levels in fetal kidney and brain.

It localises to the nucleus. Functionally, may be involved in transcriptional regulation. The protein is Zinc finger imprinted 2 (ZIM2) of Homo sapiens (Human).